The chain runs to 953 residues: Mannosylglycoprotein endo-beta-mannosidase (953 aa).

Residue Glu-461 is the Proton donor of the active site. Glu-553 functions as the Nucleophile in the catalytic mechanism.

This sequence belongs to the glycosyl hydrolase 2 family. Heterotrimer of 31 kDa, 28 kDa and 42 kDa subunits. The mature enzyme is proteotically cleaved into 3 subunits of 31 kDa, 28 kDa and 42 kDa. In terms of tissue distribution, ubiquitously expressed.

It carries out the reaction Hydrolysis of the alpha-D-mannosyl-(1-&gt;6)-beta-D-mannosyl-(1-&gt;4)-N-acetyl-beta-D-glucosaminyl-(1-&gt;4)-N-acetyl-beta-D-glucosaminyl sequence of glycoprotein to alpha-D-mannosyl-(1-&gt;6)-D-mannose and N-acetyl-beta-D-glucosaminyl-(1-&gt;4)-N-acetyl-beta-D-glucosaminyl sequences.. Its function is as follows. Glycosidase that specifically hydrolyzes the Man-beta-1,4-GlcNAc linkage in the trimannosyl core structure of N-glycans. Does not hydrolyzes pyridylamino derivatives sugar chains containing Man-alpha-1,3-Man-beta or Xylose-beta-1,2-Man-beta. The sequence is that of Mannosylglycoprotein endo-beta-mannosidase (EBM) from Lilium longiflorum (Trumpet lily).